The primary structure comprises 431 residues: ETS domain-containing protein Elk-4 (431 aa).

A DNA-binding region (ETS) is located at residues 5 to 85; it reads ITLWQFLLQL…NGQKFVYKFV (81 aa). A disordered region spans residues 114 to 139; the sequence is SSSSKDVENGGKDKPPQPGAKTSSRN. A compositionally biased stretch (basic and acidic residues) spans 118-128; it reads KDVENGGKDKP. Lys167 participates in a covalent cross-link: Glycyl lysine isopeptide (Lys-Gly) (interchain with G-Cter in SUMO2). Residue Ser180 is modified to Phosphoserine. 3 disordered regions span residues 251–282, 294–323, and 411–431; these read TTPP…DTDI, ENLS…KKPK, and TLSG…LQKT. Residues 261 to 273 are compositionally biased toward pro residues; sequence LQEPPRTPSPPLS. A compositionally biased stretch (basic and acidic residues) spans 299–313; that stretch reads EPKDQDSVLLEKDKV.

Belongs to the ETS family. In terms of assembly, interacts with SIRT7.

Its subcellular location is the nucleus. Its function is as follows. Involved in both transcriptional activation and repression. Interaction with SIRT7 leads to recruitment and stabilization of SIRT7 at promoters, followed by deacetylation of histone H3 at 'Lys-18' (H3K18Ac) and subsequent transcription repression. Forms a ternary complex with the serum response factor (SRF). Requires DNA-bound SRF for ternary complex formation and makes extensive DNA contacts to the 5'side of SRF, but does not bind DNA autonomously. The protein is ETS domain-containing protein Elk-4 (ELK4) of Homo sapiens (Human).